A 171-amino-acid chain; its full sequence is MKRTKKYPFLTLQRQRFHLNFENASSAAGIPAERDFYRWAWSALKNEYRRADISLILLDEEEARAYNRDYRGKDYATNVLSFALNEGEILPCQVSEKLYGDLIICPQVVLKEAAEQGKTPERHFAHLTIHGVLHLMGYDHIEDDEAEIMEAEEIRLMLAAGFPNPYQEDEY.

3 residues coordinate Zn(2+): histidine 130, histidine 134, and histidine 140.

The protein belongs to the endoribonuclease YbeY family. Zn(2+) serves as cofactor.

The protein resides in the cytoplasm. Its function is as follows. Single strand-specific metallo-endoribonuclease involved in late-stage 70S ribosome quality control and in maturation of the 3' terminus of the 16S rRNA. The chain is Endoribonuclease YbeY from Neisseria meningitidis serogroup C / serotype 2a (strain ATCC 700532 / DSM 15464 / FAM18).